A 338-amino-acid polypeptide reads, in one-letter code: Lipoyl synthase (338 aa).

Residues 1–24 (MTTVQEAVPNLIPTQDATPRPAPK) form a disordered region. [4Fe-4S] cluster contacts are provided by Cys-84, Cys-89, Cys-95, Cys-110, Cys-114, Cys-117, and Ser-324. The Radical SAM core domain maps to 96 to 313 (FSGGTATFMI…AEEGYKMGFK (218 aa)).

Belongs to the radical SAM superfamily. Lipoyl synthase family. It depends on [4Fe-4S] cluster as a cofactor.

Its subcellular location is the cytoplasm. The catalysed reaction is [[Fe-S] cluster scaffold protein carrying a second [4Fe-4S](2+) cluster] + N(6)-octanoyl-L-lysyl-[protein] + 2 oxidized [2Fe-2S]-[ferredoxin] + 2 S-adenosyl-L-methionine + 4 H(+) = [[Fe-S] cluster scaffold protein] + N(6)-[(R)-dihydrolipoyl]-L-lysyl-[protein] + 4 Fe(3+) + 2 hydrogen sulfide + 2 5'-deoxyadenosine + 2 L-methionine + 2 reduced [2Fe-2S]-[ferredoxin]. The protein operates within protein modification; protein lipoylation via endogenous pathway; protein N(6)-(lipoyl)lysine from octanoyl-[acyl-carrier-protein]: step 2/2. Its function is as follows. Catalyzes the radical-mediated insertion of two sulfur atoms into the C-6 and C-8 positions of the octanoyl moiety bound to the lipoyl domains of lipoate-dependent enzymes, thereby converting the octanoylated domains into lipoylated derivatives. The polypeptide is Lipoyl synthase (Pseudomonas putida (strain W619)).